A 91-amino-acid chain; its full sequence is Small ribosomal subunit protein bS20 (91 aa).

The interval 1–23 (MANTPSAKKRAKQAEKRRSHNAS) is disordered. Positions 7 to 20 (AKKRAKQAEKRRSH) are enriched in basic residues.

Belongs to the bacterial ribosomal protein bS20 family.

Binds directly to 16S ribosomal RNA. This Pseudomonas aeruginosa (strain LESB58) protein is Small ribosomal subunit protein bS20.